The sequence spans 299 residues: Aspartate carbamoyltransferase catalytic subunit (299 aa).

2 residues coordinate carbamoyl phosphate: Arg51 and Thr52. Lys80 serves as a coordination point for L-aspartate. 3 residues coordinate carbamoyl phosphate: Arg101, His129, and Gln132. Residues Arg162 and Arg221 each contribute to the L-aspartate site. The carbamoyl phosphate site is built by Leu260 and Pro261.

The protein belongs to the aspartate/ornithine carbamoyltransferase superfamily. ATCase family. Heterooligomer of catalytic and regulatory chains.

The catalysed reaction is carbamoyl phosphate + L-aspartate = N-carbamoyl-L-aspartate + phosphate + H(+). It functions in the pathway pyrimidine metabolism; UMP biosynthesis via de novo pathway; (S)-dihydroorotate from bicarbonate: step 2/3. Functionally, catalyzes the condensation of carbamoyl phosphate and aspartate to form carbamoyl aspartate and inorganic phosphate, the committed step in the de novo pyrimidine nucleotide biosynthesis pathway. This is Aspartate carbamoyltransferase catalytic subunit from Sulfolobus acidocaldarius (strain ATCC 33909 / DSM 639 / JCM 8929 / NBRC 15157 / NCIMB 11770).